A 292-amino-acid chain; its full sequence is Phosphoribosylglycinamide formyltransferase, chloroplastic (292 aa).

Residues 1–65 (MESRVLFSSQ…KAASSTPQIV (65 aa)) constitute a chloroplast transit peptide. A N(1)-(5-phospho-beta-D-ribosyl)glycinamide-binding site is contributed by 88-90 (GSN). (6R)-10-formyltetrahydrofolate is bound by residues 167–170 (LKLI) and asparagine 184. Histidine 186 serves as the catalytic Proton donor. A (6R)-10-formyltetrahydrofolate-binding site is contributed by aspartate 227. N(1)-(5-phospho-beta-D-ribosyl)glycinamide is bound at residue glutamate 256.

It belongs to the GART family.

It localises to the plastid. It is found in the chloroplast. It carries out the reaction N(1)-(5-phospho-beta-D-ribosyl)glycinamide + (6R)-10-formyltetrahydrofolate = N(2)-formyl-N(1)-(5-phospho-beta-D-ribosyl)glycinamide + (6S)-5,6,7,8-tetrahydrofolate + H(+). It functions in the pathway purine metabolism; IMP biosynthesis via de novo pathway; N(2)-formyl-N(1)-(5-phospho-D-ribosyl)glycinamide from N(1)-(5-phospho-D-ribosyl)glycinamide (10-formyl THF route): step 1/1. This chain is Phosphoribosylglycinamide formyltransferase, chloroplastic (PUR3), found in Arabidopsis thaliana (Mouse-ear cress).